Here is a 156-residue protein sequence, read N- to C-terminus: Putative increased recombination centers protein 11 (156 aa).

The helical transmembrane segment at 20–42 (AALGATCLLHYLTTSLSIRFFFH) threads the bilayer.

It localises to the membrane. This Saccharomyces cerevisiae (strain ATCC 204508 / S288c) (Baker's yeast) protein is Putative increased recombination centers protein 11 (IRC11).